Reading from the N-terminus, the 124-residue chain is Small ribosomal subunit protein uS12 (124 aa).

A 3-methylthioaspartic acid modification is found at Asp-89.

It belongs to the universal ribosomal protein uS12 family. As to quaternary structure, part of the 30S ribosomal subunit. Contacts proteins S8 and S17. May interact with IF1 in the 30S initiation complex.

In terms of biological role, with S4 and S5 plays an important role in translational accuracy. Its function is as follows. Interacts with and stabilizes bases of the 16S rRNA that are involved in tRNA selection in the A site and with the mRNA backbone. Located at the interface of the 30S and 50S subunits, it traverses the body of the 30S subunit contacting proteins on the other side and probably holding the rRNA structure together. The combined cluster of proteins S8, S12 and S17 appears to hold together the shoulder and platform of the 30S subunit. In Leptospira biflexa serovar Patoc (strain Patoc 1 / Ames), this protein is Small ribosomal subunit protein uS12.